The following is a 389-amino-acid chain: Type 2 DNA topoisomerase 6 subunit A (389 aa).

One can recognise a Topo IIA-type catalytic domain in the interval 12 to 162 (EARRKAANIL…MLILSKEKGK (151 aa)). The O-(5'-phospho-DNA)-tyrosine intermediate role is filled by Y106. Mg(2+) contacts are provided by E209 and D261.

Belongs to the TOP6A family. As to quaternary structure, homodimer. Heterotetramer of two Top6A and two Top6B chains. The cofactor is Mg(2+).

It carries out the reaction ATP-dependent breakage, passage and rejoining of double-stranded DNA.. With respect to regulation, not inhibited by the DNA gyrase inhibitor novobiocin, instead inhibited by eukaryotic topoisomerase inhibitors such as m- and o-amsacrine, ellipticine, and the quinolone CP-115,953. Relaxes both positive and negative supercoils and exhibits a strong decatenase and unknotting activity; it cannot introduce DNA supercoils. ATP is absolutely required for DNA cleavage; the nonhydrolyzable analog AMP-PNP generates nicked or linear products from a supercoiled dsDNA substrate. Generates staggered two-nucleotide long 5' overhangs. The enzyme is covalently attached transiently to the 5'-ends of the cleaved strands. The sequence is that of Type 2 DNA topoisomerase 6 subunit A from Saccharolobus shibatae (strain ATCC 51178 / DSM 5389 / JCM 8931 / NBRC 15437 / B12) (Sulfolobus shibatae).